The primary structure comprises 258 residues: MTTTLTTDLNADAGESFGHWPLGDDARLFPLLTSVNLALGFHAGDPVTLHSAVRLARQHGLGIGAHPGYPDLVGFGRRELALTPLEIQAATLYQIGALQAFLTVEGGTLQHVKAHGALYMRIHEDRAAGEAFCHAVQQLVPQAYLIVLAGAAGSDLALTAAAHGLRVRREAFPERAYTGDGRLASRQLPGSSIHDPAEAARRAVGMAQGWVQTLGGERLALEMDTLCIHGDNPQAVAIAGAIRAALAENGVTLARLHD.

This sequence belongs to the LamB/PxpA family. As to quaternary structure, forms a complex composed of PxpA, PxpB and PxpC.

It carries out the reaction 5-oxo-L-proline + ATP + 2 H2O = L-glutamate + ADP + phosphate + H(+). In terms of biological role, catalyzes the cleavage of 5-oxoproline to form L-glutamate coupled to the hydrolysis of ATP to ADP and inorganic phosphate. The protein is 5-oxoprolinase subunit A of Deinococcus radiodurans (strain ATCC 13939 / DSM 20539 / JCM 16871 / CCUG 27074 / LMG 4051 / NBRC 15346 / NCIMB 9279 / VKM B-1422 / R1).